A 192-amino-acid chain; its full sequence is Pyridoxal 5'-phosphate synthase subunit PdxT (192 aa).

53–55 contributes to the L-glutamine binding site; that stretch reads GES. Catalysis depends on C82, which acts as the Nucleophile. Residues R108 and 134-135 each bind L-glutamine; that span reads IR. Catalysis depends on charge relay system residues H170 and E172.

Belongs to the glutaminase PdxT/SNO family. In the presence of PdxS, forms a dodecamer of heterodimers. Only shows activity in the heterodimer.

It catalyses the reaction aldehydo-D-ribose 5-phosphate + D-glyceraldehyde 3-phosphate + L-glutamine = pyridoxal 5'-phosphate + L-glutamate + phosphate + 3 H2O + H(+). It carries out the reaction L-glutamine + H2O = L-glutamate + NH4(+). It functions in the pathway cofactor biosynthesis; pyridoxal 5'-phosphate biosynthesis. Its function is as follows. Catalyzes the hydrolysis of glutamine to glutamate and ammonia as part of the biosynthesis of pyridoxal 5'-phosphate. The resulting ammonia molecule is channeled to the active site of PdxS. The protein is Pyridoxal 5'-phosphate synthase subunit PdxT of Methanosphaera stadtmanae (strain ATCC 43021 / DSM 3091 / JCM 11832 / MCB-3).